The following is a 262-amino-acid chain: Lipoate-protein ligase A subunit 1 (262 aa).

One can recognise a BPL/LPL catalytic domain in the interval 30–226 (YGDKPILRFY…GFSETLHIDF (197 aa)). The ATP site is built by Arg-72, Gly-77, Tyr-80, Asp-85, Pro-132, and Lys-135. Positions 137 and 138 each coordinate Mg(2+). Residues Lys-145, Ala-149, and Ala-163 each contribute to the ATP site. A (R)-lipoate-binding site is contributed by Lys-145. Ala-149 is a binding site for Mg(2+).

Belongs to the LplA family. Heterodimer composed of LplA and LplB.

Its subcellular location is the cytoplasm. It catalyses the reaction L-lysyl-[lipoyl-carrier protein] + (R)-lipoate + ATP = N(6)-[(R)-lipoyl]-L-lysyl-[lipoyl-carrier protein] + AMP + diphosphate + H(+). It functions in the pathway protein modification; protein lipoylation via exogenous pathway; protein N(6)-(lipoyl)lysine from lipoate: step 1/2. The protein operates within protein modification; protein lipoylation via exogenous pathway; protein N(6)-(lipoyl)lysine from lipoate: step 2/2. In terms of biological role, part of a lipoate-protein ligase complex that catalyzes both the ATP-dependent activation of exogenously supplied lipoate to lipoyl-AMP and the transfer of the activated lipoyl onto the lipoyl domains of lipoate-dependent enzymes. Can also use octanoate as substrate. In Thermoplasma acidophilum (strain ATCC 25905 / DSM 1728 / JCM 9062 / NBRC 15155 / AMRC-C165), this protein is Lipoate-protein ligase A subunit 1 (lplA).